The following is a 443-amino-acid chain: ATP-dependent protease ATPase subunit HslU (443 aa).

ATP is bound by residues Ile18 and 60–65 (GVGKTE). Positions 139 to 158 (AKNNWGQNETPAEPSSARQS) are disordered. ATP is bound by residues Asp256, Glu321, and Arg393.

This sequence belongs to the ClpX chaperone family. HslU subfamily. As to quaternary structure, a double ring-shaped homohexamer of HslV is capped on each side by a ring-shaped HslU homohexamer. The assembly of the HslU/HslV complex is dependent on binding of ATP.

The protein resides in the cytoplasm. Functionally, ATPase subunit of a proteasome-like degradation complex; this subunit has chaperone activity. The binding of ATP and its subsequent hydrolysis by HslU are essential for unfolding of protein substrates subsequently hydrolyzed by HslV. HslU recognizes the N-terminal part of its protein substrates and unfolds these before they are guided to HslV for hydrolysis. In Erwinia tasmaniensis (strain DSM 17950 / CFBP 7177 / CIP 109463 / NCPPB 4357 / Et1/99), this protein is ATP-dependent protease ATPase subunit HslU.